The primary structure comprises 290 residues: Transposon Ty3-I Gag polyprotein (290 aa).

S2 carries the N-acetylserine modification. The CCHC-type zinc finger occupies 265-282 (RLCFYCKKEGHRLNECRA).

The protein localises to the cytoplasm. In terms of biological role, capsid protein (CA) is the structural component of the virus-like particle (VLP), forming the shell that encapsulates the retrotransposons dimeric RNA genome. Functionally, nucleocapsid protein p9 (NC) forms the nucleocore that coats the retro-elements dimeric RNA. Binds these RNAs through its zinc fingers. Promotes primer tRNA(i)-Met annealing to the multipartite primer-binding site (PBS), dimerization of Ty3 RNA and initiation of reverse transcription. The protein is Transposon Ty3-I Gag polyprotein (TY3A-I) of Saccharomyces cerevisiae (strain ATCC 204508 / S288c) (Baker's yeast).